A 155-amino-acid chain; its full sequence is Ribonuclease H (155 aa).

The RNase H type-1 domain maps to 4–145 (TEPTVYAYTD…ADRLANRGID (142 aa)). Asp-13, Glu-51, Asp-73, and Asp-137 together coordinate Mg(2+).

The protein belongs to the RNase H family. Monomer. Mg(2+) is required as a cofactor.

The protein localises to the cytoplasm. The enzyme catalyses Endonucleolytic cleavage to 5'-phosphomonoester.. Functionally, endonuclease that specifically degrades the RNA of RNA-DNA hybrids. This is Ribonuclease H from Methylococcus capsulatus (strain ATCC 33009 / NCIMB 11132 / Bath).